The sequence spans 525 residues: GMP synthase [glutamine-hydrolyzing] (525 aa).

The Glutamine amidotransferase type-1 domain maps to 9–207 (RILILDFGSQ…VLEICGCAAL (199 aa)). Residue cysteine 86 is the Nucleophile of the active site. Active-site residues include histidine 181 and glutamate 183. The GMPS ATP-PPase domain occupies 208–400 (WTPATIIEDA…LGLPYDMLYR (193 aa)). 235-241 (SGGVDSS) serves as a coordination point for ATP.

In terms of assembly, homodimer.

It carries out the reaction XMP + L-glutamine + ATP + H2O = GMP + L-glutamate + AMP + diphosphate + 2 H(+). The protein operates within purine metabolism; GMP biosynthesis; GMP from XMP (L-Gln route): step 1/1. In terms of biological role, catalyzes the synthesis of GMP from XMP. The polypeptide is GMP synthase [glutamine-hydrolyzing] (Edwardsiella ictaluri (strain 93-146)).